We begin with the raw amino-acid sequence, 208 residues long: Potassium-transporting ATPase KdpC subunit (208 aa).

A helical membrane pass occupies residues 6–26 (PALLVSIVLLVVCGLVYPLVL).

This sequence belongs to the KdpC family. In terms of assembly, the system is composed of three essential subunits: KdpA, KdpB and KdpC.

The protein resides in the cell membrane. Part of the high-affinity ATP-driven potassium transport (or Kdp) system, which catalyzes the hydrolysis of ATP coupled with the electrogenic transport of potassium into the cytoplasm. This subunit acts as a catalytic chaperone that increases the ATP-binding affinity of the ATP-hydrolyzing subunit KdpB by the formation of a transient KdpB/KdpC/ATP ternary complex. The chain is Potassium-transporting ATPase KdpC subunit from Clostridioides difficile (strain 630) (Peptoclostridium difficile).